We begin with the raw amino-acid sequence, 89 residues long: Large ribosomal subunit protein bL27 (89 aa).

The protein belongs to the bacterial ribosomal protein bL27 family.

The sequence is that of Large ribosomal subunit protein bL27 from Ruegeria sp. (strain TM1040) (Silicibacter sp.).